A 90-amino-acid chain; its full sequence is MMKTSVMFMLVVVISLMCSSEAQEVARTYCGRDLADTLADLCFGVEKRGVAQYAPYFWTRQYLGSRGKRGVVDECCFRPCTLDVLLSYCG.

The first 20 residues, 1-20 (MMKTSVMFMLVVVISLMCSS), serve as a signal peptide directing secretion. Cystine bridges form between cysteine 30–cysteine 76, cysteine 42–cysteine 89, and cysteine 75–cysteine 80. Residues 49–67 (GVAQYAPYFWTRQYLGSRG) constitute a propeptide, c peptide like.

The protein belongs to the insulin family. In terms of assembly, heterodimer of a B chain and an A chain linked by two disulfide bonds.

It localises to the secreted. Brain peptide responsible for activation of prothoracic glands to produce ecdysone in insects. The polypeptide is Bombyxin B-6 (BBXB6) (Bombyx mori (Silk moth)).